Reading from the N-terminus, the 253-residue chain is Ribosome-inactivating protein saporin-5 (253 aa).

E176 is a catalytic residue.

This sequence belongs to the ribosome-inactivating protein family. Type 1 RIP subfamily.

The enzyme catalyses Endohydrolysis of the N-glycosidic bond at one specific adenosine on the 28S rRNA.. Ribosome-inactivating protein of type 1, inhibits protein synthesis in animal cells. This chain is Ribosome-inactivating protein saporin-5 (SAP5), found in Saponaria officinalis (Common soapwort).